Here is a 461-residue protein sequence, read N- to C-terminus: Cysteine--tRNA ligase (461 aa).

Cys29 serves as a coordination point for Zn(2+). The 'HIGH' region motif lies at 31 to 41 (MTIYDLCHVGH). Positions 213, 238, and 242 each coordinate Zn(2+). The short motif at 274 to 278 (KMSKS) is the 'KMSKS' region element. Lys277 serves as a coordination point for ATP.

Belongs to the class-I aminoacyl-tRNA synthetase family. As to quaternary structure, monomer. Zn(2+) is required as a cofactor.

Its subcellular location is the cytoplasm. The enzyme catalyses tRNA(Cys) + L-cysteine + ATP = L-cysteinyl-tRNA(Cys) + AMP + diphosphate. The polypeptide is Cysteine--tRNA ligase (Methylibium petroleiphilum (strain ATCC BAA-1232 / LMG 22953 / PM1)).